Here is a 728-residue protein sequence, read N- to C-terminus: Catalase-peroxidase 1 (728 aa).

Positions 1 to 22 are cleaved as a signal peptide; the sequence is MDKTQSSQGKCPVMHGANSAVA. Positions 97–225 form a cross-link, tryptophyl-tyrosyl-methioninium (Trp-Tyr) (with M-251); sequence WHSAGTYRVA…LAAVMMGLIY (129 aa). The active-site Proton acceptor is the H98. A cross-link (tryptophyl-tyrosyl-methioninium (Tyr-Met) (with W-97)) is located at residues 225-251; that stretch reads YVNPEGVDGKPDPLRTAQDVRVTFARM. H266 contributes to the heme b binding site.

It belongs to the peroxidase family. Peroxidase/catalase subfamily. As to quaternary structure, homodimer or homotetramer. Heme b serves as cofactor. Formation of the three residue Trp-Tyr-Met cross-link is important for the catalase, but not the peroxidase activity of the enzyme.

The enzyme catalyses H2O2 + AH2 = A + 2 H2O. It catalyses the reaction 2 H2O2 = O2 + 2 H2O. In terms of biological role, bifunctional enzyme with both catalase and broad-spectrum peroxidase activity. The sequence is that of Catalase-peroxidase 1 from Shewanella sp. (strain ANA-3).